A 438-amino-acid chain; its full sequence is Phosphoribosylamine--glycine ligase (438 aa).

The region spanning 108–316 (RTFMERNEIP…LLEVAEGIVD (209 aa)) is the ATP-grasp domain. 135–194 (VDDFGRPVVVKPIGLTGGKGVKVVGYQLRDNEEAKSYAEELIRRDGRVLIEERTNGVEFT) serves as a coordination point for ATP. The Mg(2+) site is built by Q274, E286, and N288. Residues Q274, E286, and N288 each contribute to the Mn(2+) site.

Belongs to the GARS family. It depends on Mg(2+) as a cofactor. Requires Mn(2+) as cofactor.

It catalyses the reaction 5-phospho-beta-D-ribosylamine + glycine + ATP = N(1)-(5-phospho-beta-D-ribosyl)glycinamide + ADP + phosphate + H(+). Its pathway is purine metabolism; IMP biosynthesis via de novo pathway; N(1)-(5-phospho-D-ribosyl)glycinamide from 5-phospho-alpha-D-ribose 1-diphosphate: step 2/2. The chain is Phosphoribosylamine--glycine ligase from Thermococcus gammatolerans (strain DSM 15229 / JCM 11827 / EJ3).